A 201-amino-acid polypeptide reads, in one-letter code: MFIAFEGIDGSGKSTQLNLLSQYLKSKGKKVLNIREPGGTILGEKIREILLDNNLNINKRSELLLFLASRAQLVEEVIKPHLKRGFFVLADRFSDSSIAYQGGARNIGVETVSTLNDFATDNIYPDIVFYIDIPTKIAMERLKDKNLDRLEKEGQIFLEKVRNTYLKLSKLRDNFFIIDGTKSIDNVFAEIKSIVEKHLQS.

Residue 7-14 participates in ATP binding; it reads GIDGSGKS.

The protein belongs to the thymidylate kinase family.

It catalyses the reaction dTMP + ATP = dTDP + ADP. Its function is as follows. Phosphorylation of dTMP to form dTDP in both de novo and salvage pathways of dTTP synthesis. This is Thymidylate kinase from Thermosipho africanus (strain TCF52B).